A 325-amino-acid polypeptide reads, in one-letter code: Lipoyl synthase (325 aa).

The tract at residues 1–24 (MPIAPDRVRHPEKANRPDNPIQRK) is disordered. [4Fe-4S] cluster contacts are provided by cysteine 54, cysteine 59, cysteine 65, cysteine 80, cysteine 84, cysteine 87, and serine 293. A Radical SAM core domain is found at 66–282 (WKKKHATFMI…VTVGRGKGFL (217 aa)).

It belongs to the radical SAM superfamily. Lipoyl synthase family. [4Fe-4S] cluster is required as a cofactor.

It localises to the cytoplasm. The enzyme catalyses [[Fe-S] cluster scaffold protein carrying a second [4Fe-4S](2+) cluster] + N(6)-octanoyl-L-lysyl-[protein] + 2 oxidized [2Fe-2S]-[ferredoxin] + 2 S-adenosyl-L-methionine + 4 H(+) = [[Fe-S] cluster scaffold protein] + N(6)-[(R)-dihydrolipoyl]-L-lysyl-[protein] + 4 Fe(3+) + 2 hydrogen sulfide + 2 5'-deoxyadenosine + 2 L-methionine + 2 reduced [2Fe-2S]-[ferredoxin]. It functions in the pathway protein modification; protein lipoylation via endogenous pathway; protein N(6)-(lipoyl)lysine from octanoyl-[acyl-carrier-protein]: step 2/2. Functionally, catalyzes the radical-mediated insertion of two sulfur atoms into the C-6 and C-8 positions of the octanoyl moiety bound to the lipoyl domains of lipoate-dependent enzymes, thereby converting the octanoylated domains into lipoylated derivatives. The chain is Lipoyl synthase from Rhodospirillum centenum (strain ATCC 51521 / SW).